Consider the following 462-residue polypeptide: MGKEKTHINIVVIGHVDSGKSTTTGHLIYKCGGIDKRTIEKFEKEAAEMGKGSFKYAWVLDKLKAERERGITIDISLWKFETSKYYVTIIDAPGHRDFIKNMITGTSQADCAVLIVAAGVGEFEAGISKNGQTREHALLAYTLGVKQLIVGINKMDSTEPPYSQKRYEEIVKEVSTYIKKIGYNPDTVAFVPISGWNGDNMLEPSPNMPWFKGWKITRKEGSGSGTTLLEALDCILPPSRPTDKPLRLPLQDVYKIGGIGTVPVGRVETGVIKPGMVVTFAPVNVTTEVKSVEMHHEALTEAVPGDNVGFNVKNVSVKDVRRGNVAGDSKNDPPMEAGSFTAQVIILNHPGQIGAGYAPVLDCHTAHIACKFAELKEKIDRRSGKKLEDNPKFLKSGDAAIVDMIPGKPMCVESFSDYPPLGRFAVRDMRQTVAVGVIKAVEKKAAGSGKVTKSAQKAAKTK.

A N,N,N-trimethylglycine modification is found at G2. In terms of domain architecture, tr-type G spans 5 to 242; that stretch reads KTHINIVVIG…DCILPPSRPT (238 aa). Residues 14–21 are G1; that stretch reads GHVDSGKS. Position 14–21 (14–21) interacts with GTP; the sequence is GHVDSGKS. Residues 70 to 74 form a G2 region; the sequence is GITID. Residues 91 to 94 are G3; it reads DAPG. GTP-binding positions include 91–95 and 153–156; these read DAPGH and NKMD. A G4 region spans residues 153 to 156; the sequence is NKMD. A G5 region spans residues 194-196; sequence SGW. Residues E301 and E374 each carry the 5-glutamyl glycerylphosphorylethanolamine modification.

Belongs to the TRAFAC class translation factor GTPase superfamily. Classic translation factor GTPase family. EF-Tu/EF-1A subfamily.

It localises to the cytoplasm. Functionally, this protein promotes the GTP-dependent binding of aminoacyl-tRNA to the A-site of ribosomes during protein biosynthesis. The polypeptide is Elongation factor 1-alpha, somatic form (eef1as) (Xenopus laevis (African clawed frog)).